We begin with the raw amino-acid sequence, 147 residues long: Fluoride-specific ion channel FluC 1 (147 aa).

4 helical membrane passes run 29 to 49 (YVYI…ISFL), 61 to 81 (IANL…IAFF), 90 to 110 (AITT…LELI), and 118 to 138 (FITL…LCYV). Na(+)-binding residues include Gly-97 and Thr-100.

Belongs to the fluoride channel Fluc/FEX (TC 1.A.43) family.

Its subcellular location is the cell membrane. It catalyses the reaction fluoride(in) = fluoride(out). Its activity is regulated as follows. Na(+) is not transported, but it plays an essential structural role and its presence is essential for fluoride channel function. Functionally, fluoride-specific ion channel. Important for reducing fluoride concentration in the cell, thus reducing its toxicity. This is Fluoride-specific ion channel FluC 1 from Staphylococcus aureus (strain MRSA252).